Here is a 351-residue protein sequence, read N- to C-terminus: MQPSIRSYLRTGPGYVYAAHSGTARETGRIACLASNENPFPPSEAAIAAGAAALATVNRYPDDRMTDLTEALKRLHGDHTFVVGNGMDGIIETVLRCFIGHGDRVVVSTPTFSFYGIAAAGQGAIVENIQRKEDFTVDIPAFTRACTGAKVAFLCTPNNPTGTVTTPAEVRKVLDGIGDCMLFLDNAYVDFARDDYRPLMGEYENLIIGRTMSKIFGLAGLRVGYAFIPAWLEPFYMKAATPFSGISSVSAAAAVAALADREHRERTLAHMLEWRERVRSAVRFPVLPSEANFLMIDVAPHTADDVVATLAGRGVLIRSCRSFPGLGDHYVRVSIGDAWENERFIEEINRI.

Lysine 214 is subject to N6-(pyridoxal phosphate)lysine.

It belongs to the class-II pyridoxal-phosphate-dependent aminotransferase family. Histidinol-phosphate aminotransferase subfamily. The cofactor is pyridoxal 5'-phosphate.

It carries out the reaction L-histidinol phosphate + 2-oxoglutarate = 3-(imidazol-4-yl)-2-oxopropyl phosphate + L-glutamate. Its pathway is amino-acid biosynthesis; L-histidine biosynthesis; L-histidine from 5-phospho-alpha-D-ribose 1-diphosphate: step 7/9. The chain is Histidinol-phosphate aminotransferase from Methanosphaerula palustris (strain ATCC BAA-1556 / DSM 19958 / E1-9c).